We begin with the raw amino-acid sequence, 446 residues long: Tubulin alpha-1B chain (446 aa).

Q11 serves as a coordination point for GTP. The interval 34–55 (GRLMDDSPSKHDSGSTFFSETG) is disordered. The span at 35–46 (RLMDDSPSKHDS) shows a compositional bias: basic and acidic residues. GTP contacts are provided by E69, S138, G142, T143, S177, N204, and N226. E69 lines the Mg(2+) pocket. E252 is an active-site residue.

Belongs to the tubulin family. In terms of assembly, dimer of alpha and beta chains. A typical microtubule is a hollow water-filled tube with an outer diameter of 25 nm and an inner diameter of 15 nM. Alpha-beta heterodimers associate head-to-tail to form protofilaments running lengthwise along the microtubule wall with the beta-tubulin subunit facing the microtubule plus end conferring a structural polarity. Microtubules usually have 13 protofilaments but different protofilament numbers can be found in some organisms and specialized cells. It depends on Mg(2+) as a cofactor.

It localises to the cytoplasm. The protein localises to the cytoskeleton. The catalysed reaction is GTP + H2O = GDP + phosphate + H(+). Its function is as follows. Tubulin is the major constituent of microtubules, a cylinder consisting of laterally associated linear protofilaments composed of alpha- and beta-tubulin heterodimers. Microtubules grow by the addition of GTP-tubulin dimers to the microtubule end, where a stabilizing cap forms. Below the cap, tubulin dimers are in GDP-bound state, owing to GTPase activity of alpha-tubulin. This Schizophyllum commune (Split gill fungus) protein is Tubulin alpha-1B chain (TUB-1B).